Consider the following 442-residue polypeptide: QWRF motif-containing protein 6 (442 aa).

Disordered regions lie at residues 1–144 and 221–240; these read MEAK…LSQQ and FSRL…ADTK. A compositionally biased stretch (basic residues) spans 57 to 66; that stretch reads KQHHLQHHQI. Residues 80–89 show a composition bias toward basic and acidic residues; it reads KMADGDENRS. Residues 264 to 267 carry the QWRF motif motif; it reads QWRF.

Belongs to the QWRF family.

The polypeptide is QWRF motif-containing protein 6 (QWRF6) (Arabidopsis thaliana (Mouse-ear cress)).